Consider the following 346-residue polypeptide: Ketol-acid reductoisomerase (NADP(+)) (346 aa).

Positions 1-189 (MQVYYDRDAD…GGGRSGIIET (189 aa)) constitute a KARI N-terminal Rossmann domain. NADP(+)-binding positions include 24 to 27 (YGSQ), R48, S51, T53, and 83 to 86 (DEHQ). H108 is an active-site residue. NADP(+) is bound at residue G134. Residues 190 to 335 (TFKEECETDL…EKLRAMMPWI (146 aa)) form the KARI C-terminal knotted domain. D198, E202, E234, and E238 together coordinate Mg(2+). Substrate is bound at residue S259.

This sequence belongs to the ketol-acid reductoisomerase family. Mg(2+) is required as a cofactor.

It carries out the reaction (2R)-2,3-dihydroxy-3-methylbutanoate + NADP(+) = (2S)-2-acetolactate + NADPH + H(+). The enzyme catalyses (2R,3R)-2,3-dihydroxy-3-methylpentanoate + NADP(+) = (S)-2-ethyl-2-hydroxy-3-oxobutanoate + NADPH + H(+). The protein operates within amino-acid biosynthesis; L-isoleucine biosynthesis; L-isoleucine from 2-oxobutanoate: step 2/4. Its pathway is amino-acid biosynthesis; L-valine biosynthesis; L-valine from pyruvate: step 2/4. Its function is as follows. Involved in the biosynthesis of branched-chain amino acids (BCAA). Catalyzes an alkyl-migration followed by a ketol-acid reduction of (S)-2-acetolactate (S2AL) to yield (R)-2,3-dihydroxy-isovalerate. In the isomerase reaction, S2AL is rearranged via a Mg-dependent methyl migration to produce 3-hydroxy-3-methyl-2-ketobutyrate (HMKB). In the reductase reaction, this 2-ketoacid undergoes a metal-dependent reduction by NADPH to yield (R)-2,3-dihydroxy-isovalerate. The sequence is that of Ketol-acid reductoisomerase (NADP(+)) from Sphingopyxis alaskensis (strain DSM 13593 / LMG 18877 / RB2256) (Sphingomonas alaskensis).